The sequence spans 532 residues: Pre-rRNA-processing protein pro-1 (532 aa).

WD repeat units follow at residues 136 to 175 and 287 to 326; these read AHYQ…SADR and GHSD…CLKV. Positions 435–464 are disordered; that stretch reads TLGDDEDDAPEVGNQRRQNKKNNKKNRKLQ. Residues 445–526 adopt a coiled-coil conformation; it reads EVGNQRRQNK…INRQMYEFVA (82 aa). A compositionally biased stretch (basic residues) spans 451-464; the sequence is RQNKKNNKKNRKLQ.

This sequence belongs to the WD repeat IPI3/WDR18 family. Component of the PELP1 complex, composed of at least PELP1, TEX10 and WDR18. The complex interacts with pre-60S ribosome particles.

The protein localises to the nucleus. It localises to the nucleolus. The protein resides in the nucleoplasm. Its function is as follows. Component of the PELP1 complex involved in the nucleolar steps of 28S rRNA maturation and the subsequent nucleoplasmic transit of the pre-60S ribosomal subunit. Required for processing ITS2 sequences from rRNA intermediates during 26S rRNA maturation. Required in the soma to promote normal proliferation and prevent germline tumor formation. The protein is Pre-rRNA-processing protein pro-1 (pro-1) of Caenorhabditis briggsae.